Reading from the N-terminus, the 168-residue chain is S-ribosylhomocysteine lyase (168 aa).

His-54, His-58, and Cys-128 together coordinate Fe cation.

This sequence belongs to the LuxS family. As to quaternary structure, homodimer. It depends on Fe cation as a cofactor.

It carries out the reaction S-(5-deoxy-D-ribos-5-yl)-L-homocysteine = (S)-4,5-dihydroxypentane-2,3-dione + L-homocysteine. Functionally, involved in the synthesis of autoinducer 2 (AI-2) which is secreted by bacteria and is used to communicate both the cell density and the metabolic potential of the environment. The regulation of gene expression in response to changes in cell density is called quorum sensing. Catalyzes the transformation of S-ribosylhomocysteine (RHC) to homocysteine (HC) and 4,5-dihydroxy-2,3-pentadione (DPD). The polypeptide is S-ribosylhomocysteine lyase (Neisseria meningitidis serogroup C (strain 053442)).